The sequence spans 330 residues: Aspartate--ammonia ligase (330 aa).

It belongs to the class-II aminoacyl-tRNA synthetase family. AsnA subfamily.

Its subcellular location is the cytoplasm. It catalyses the reaction L-aspartate + NH4(+) + ATP = L-asparagine + AMP + diphosphate + H(+). It participates in amino-acid biosynthesis; L-asparagine biosynthesis; L-asparagine from L-aspartate (ammonia route): step 1/1. The polypeptide is Aspartate--ammonia ligase (Streptococcus pyogenes serotype M1).